The sequence spans 285 residues: Undecaprenyl-diphosphatase (285 aa).

The next 7 membrane-spanning stretches (helical) occupy residues 40 to 60 (GPLI…VYFF), 89 to 109 (LFWW…AIKL), 137 to 157 (DLIA…DWLG), 171 to 191 (GLIV…RSGV), 209 to 229 (FSFL…VPEI), 241 to 261 (LIAG…LMNF), and 265 to 285 (ASML…LAFF).

Belongs to the UppP family.

It is found in the cell inner membrane. The enzyme catalyses di-trans,octa-cis-undecaprenyl diphosphate + H2O = di-trans,octa-cis-undecaprenyl phosphate + phosphate + H(+). In terms of biological role, catalyzes the dephosphorylation of undecaprenyl diphosphate (UPP). Confers resistance to bacitracin. The chain is Undecaprenyl-diphosphatase from Erythrobacter litoralis (strain HTCC2594).